The primary structure comprises 254 residues: Coenzyme F420:L-glutamate ligase (254 aa).

GTP-binding positions include 11–14 (IPLI), 40–41 (ST), and Lys-45. Asp-109 contacts a divalent metal cation. Asn-112 contacts GTP. A divalent metal cation is bound by residues Asp-150, Thr-151, and Glu-208. 206–213 (MGEGAGGI) serves as a coordination point for GTP.

It belongs to the CofE family. As to quaternary structure, homodimer. The cofactor is Mg(2+). Requires Mn(2+) as cofactor. It depends on K(+) as a cofactor.

It carries out the reaction oxidized coenzyme F420-0 + GTP + L-glutamate = oxidized coenzyme F420-1 + GDP + phosphate + H(+). The enzyme catalyses oxidized coenzyme F420-1 + GTP + L-glutamate = oxidized coenzyme F420-2 + GDP + phosphate + H(+). It participates in cofactor biosynthesis; coenzyme F420 biosynthesis. Functionally, catalyzes the GTP-dependent successive addition of two or more gamma-linked L-glutamates to the L-lactyl phosphodiester of 7,8-didemethyl-8-hydroxy-5-deazariboflavin (F420-0) to form coenzyme F420-0-glutamyl-glutamate (F420-2) or polyglutamated F420 derivatives. The chain is Coenzyme F420:L-glutamate ligase from Methanosarcina acetivorans (strain ATCC 35395 / DSM 2834 / JCM 12185 / C2A).